Consider the following 787-residue polypeptide: Protein translocase subunit SecA (787 aa).

ATP is bound by residues Q85, 103 to 107 (GEGKT), and D492.

This sequence belongs to the SecA family. Monomer and homodimer. Part of the essential Sec protein translocation apparatus which comprises SecA, SecYEG and auxiliary proteins SecDF. Other proteins may also be involved.

The protein resides in the cell membrane. It is found in the cytoplasm. It carries out the reaction ATP + H2O + cellular proteinSide 1 = ADP + phosphate + cellular proteinSide 2.. In terms of biological role, part of the Sec protein translocase complex. Interacts with the SecYEG preprotein conducting channel. Has a central role in coupling the hydrolysis of ATP to the transfer of proteins into and across the cell membrane, serving as an ATP-driven molecular motor driving the stepwise translocation of polypeptide chains across the membrane. The sequence is that of Protein translocase subunit SecA from Latilactobacillus sakei subsp. sakei (strain 23K) (Lactobacillus sakei subsp. sakei).